We begin with the raw amino-acid sequence, 198 residues long: 3-isopropylmalate dehydratase small subunit (198 aa).

This sequence belongs to the LeuD family. LeuD type 1 subfamily. As to quaternary structure, heterodimer of LeuC and LeuD.

The catalysed reaction is (2R,3S)-3-isopropylmalate = (2S)-2-isopropylmalate. It functions in the pathway amino-acid biosynthesis; L-leucine biosynthesis; L-leucine from 3-methyl-2-oxobutanoate: step 2/4. Its function is as follows. Catalyzes the isomerization between 2-isopropylmalate and 3-isopropylmalate, via the formation of 2-isopropylmaleate. The chain is 3-isopropylmalate dehydratase small subunit from Mycolicibacterium paratuberculosis (strain ATCC BAA-968 / K-10) (Mycobacterium paratuberculosis).